A 289-amino-acid polypeptide reads, in one-letter code: ATP synthase gamma chain (289 aa).

The protein belongs to the ATPase gamma chain family. As to quaternary structure, F-type ATPases have 2 components, CF(1) - the catalytic core - and CF(0) - the membrane proton channel. CF(1) has five subunits: alpha(3), beta(3), gamma(1), delta(1), epsilon(1). CF(0) has three main subunits: a, b and c.

The protein localises to the cell inner membrane. Produces ATP from ADP in the presence of a proton gradient across the membrane. The gamma chain is believed to be important in regulating ATPase activity and the flow of protons through the CF(0) complex. The protein is ATP synthase gamma chain of Actinobacillus succinogenes (strain ATCC 55618 / DSM 22257 / CCUG 43843 / 130Z).